Reading from the N-terminus, the 146-residue chain is Prostaglandin E synthase 3 (146 aa).

The region spanning 1–76 (VFIEFCVEDS…ESGQAWPRLT (76 aa)) is the CS domain. Residues 110 to 146 (SEMMNNMGGDDDVDLPEVDGADDDSPDSDDEKMPDLE) are disordered. Over residues 118 to 139 (GDDDVDLPEVDGADDDSPDSDD) the composition is skewed to acidic residues.

It belongs to the p23/wos2 family. As to quaternary structure, binds to telomerase. Binds to the progesterone receptor.

The protein localises to the cytoplasm. It catalyses the reaction prostaglandin H2 = prostaglandin E2. The protein operates within lipid metabolism; prostaglandin biosynthesis. Functionally, molecular chaperone. In Gallus gallus (Chicken), this protein is Prostaglandin E synthase 3 (PTGES3).